Consider the following 322-residue polypeptide: MRPEAQTGHLPVSQSPAVHLPVLYTQVLEGLRVIENGRYLDGTFGRGGHARGVLTQLGPEGRLLVMDKDPEAIAVAERDFAPDPRVSIFRGSFAQLLQWDATAEGLDGVLFDLGVSSPQLDVAERGFSFGKDGPLDMRMDPDSGESAAQWINRVEEREIADVLWTYGEERQSRRIARAIVARREKQPFSRTAELAELIASVMPRGKDKIHPATRSFQAIRIHINRELADLEAGLDAAVERLKPGGRLAVISFHSLEDRIVKQYMNRLAKAPPANRRLPEAVAFVPTLDLIGGAIKATDEELAANPRARSAVLRVAQKREADA.

Residues 47-49 (GGH), aspartate 67, phenylalanine 93, aspartate 112, and glutamine 119 each bind S-adenosyl-L-methionine.

The protein belongs to the methyltransferase superfamily. RsmH family.

The protein localises to the cytoplasm. It catalyses the reaction cytidine(1402) in 16S rRNA + S-adenosyl-L-methionine = N(4)-methylcytidine(1402) in 16S rRNA + S-adenosyl-L-homocysteine + H(+). Its function is as follows. Specifically methylates the N4 position of cytidine in position 1402 (C1402) of 16S rRNA. The sequence is that of Ribosomal RNA small subunit methyltransferase H from Stenotrophomonas maltophilia (strain K279a).